Here is a 251-residue protein sequence, read N- to C-terminus: UstYa family oxidase phomYb (251 aa).

Residues 1-47 (MDGYSSKKPRSASPSRSSLTEVEEEERDTLLKTVSLEEEDKSGENGP) form a disordered region. Residues 58 to 78 (AIGILMLSNIAFIAAFLTVFV) form a helical membrane-spanning segment. Residue Asn-135 is glycosylated (N-linked (GlcNAc...) asparagine). Short sequence motifs (HXXHC) lie at residues 160–164 (HQLHC) and 187–191 (HVSHC).

Belongs to the ustYa family.

It localises to the membrane. It participates in mycotoxin biosynthesis. In terms of biological role, ustYa family oxidase; part of the gene cluster that mediates the biosynthesis of the phomopsins, a group of hexapeptide mycotoxins which infects lupins and causes lupinosis disease in livestock. Within the pathway, phomYb is probably involved in the construction of the macrocyclic structure of the phomopsins. The pathway starts with the processing of the precursor phomA by several endopeptidases including kexin proteases as well as the cluster-specific S41 family peptidase phomP1 and the oligopeptidase phomG to produce 10 identical copies of the hexapeptide Tyr-Val-Ile-Pro-Ile-Asp. After being excised from the precursor peptide, the core peptides are cyclized and modified post-translationally by enzymes encoded within the gene cluster. The timing and order of proteolysis of the phomA precursor and PTMs are still unknown. Two tyrosinase-like enzymes, phomQ1 and phomQ2, catalyze the chlorination and hydroxylation of Tyr, respectively. PhomYb, is proposed to be involved in the construction of the macrocyclic structure. The other 4 ustYa family proteins may be involved in PTMs that generate the unique structure of phomopsin A. PhomYa is required for the hydroxylation of C-beta of Tyr. PhomYc, phomYd, and phomYe are responsible for the biosynthesis of 2,3-dehydroisoleucine (dIle), 2,3-dehydroaspartic acid (dAsp), and 3,4-dehydroproline (dPro), respectively. While dIle formation by phomYc is indispensable for the installation of dAsp by phomYd, the order of the other PTMs have not been elucidated yet. Most of the biosynthetic enzymes likely have broad substrate specificity, and thus, there might be a metabolic grid from a precursor to phomopsin A. The enzyme(s) responsible for the biosynthesis of 3,4-dehydrovaline (dVal) have also not been identified yet. Finally, phomM acts as an S-adenosylmethionine-dependent alpha-N-methyltransferase that catalyzes two successive N-methylation reactions, converting N-desmethyl-phomopsin A to phomopsin A and phomopsin A further to an N,N-dimethylated congener called phomopsin E. The protein is UstYa family oxidase phomYb of Diaporthe leptostromiformis (Lupinosis disease fungus).